Here is a 159-residue protein sequence, read N- to C-terminus: Transcriptional repressor NrdR (159 aa).

The segment at 3 to 34 is a zinc-finger region; that stretch reads CPTCQNTDSRVLESRSADTGKSVRRRRECLNC. In terms of domain architecture, ATP-cone spans 49-139; it reads ISVLKKDGSR…VYRKFNGVKD (91 aa).

This sequence belongs to the NrdR family. The cofactor is Zn(2+).

Its function is as follows. Negatively regulates transcription of bacterial ribonucleotide reductase nrd genes and operons by binding to NrdR-boxes. In Prochlorococcus marinus (strain MIT 9515), this protein is Transcriptional repressor NrdR.